A 299-amino-acid chain; its full sequence is Putative activator of 90 kDa heat shock protein ATPase homolog 2 (299 aa).

Belongs to the AHA1 family.

In terms of biological role, co-chaperone that stimulates HSP90 ATPase activity. The sequence is that of Putative activator of 90 kDa heat shock protein ATPase homolog 2 from Homo sapiens (Human).